Here is a 171-residue protein sequence, read N- to C-terminus: ATP synthase subunit b (171 aa).

The helical transmembrane segment at 24–44 (INLVIVIGVLYWFLKGFLGGI) threads the bilayer.

The protein belongs to the ATPase B chain family. In terms of assembly, F-type ATPases have 2 components, F(1) - the catalytic core - and F(0) - the membrane proton channel. F(1) has five subunits: alpha(3), beta(3), gamma(1), delta(1), epsilon(1). F(0) has four main subunits: a(1), b(1), b'(1) and c(10-14). The alpha and beta chains form an alternating ring which encloses part of the gamma chain. F(1) is attached to F(0) by a central stalk formed by the gamma and epsilon chains, while a peripheral stalk is formed by the delta, b and b' chains.

Its subcellular location is the cellular thylakoid membrane. In terms of biological role, f(1)F(0) ATP synthase produces ATP from ADP in the presence of a proton or sodium gradient. F-type ATPases consist of two structural domains, F(1) containing the extramembraneous catalytic core and F(0) containing the membrane proton channel, linked together by a central stalk and a peripheral stalk. During catalysis, ATP synthesis in the catalytic domain of F(1) is coupled via a rotary mechanism of the central stalk subunits to proton translocation. Component of the F(0) channel, it forms part of the peripheral stalk, linking F(1) to F(0). The protein is ATP synthase subunit b of Synechococcus sp. (strain WH7803).